A 140-amino-acid polypeptide reads, in one-letter code: VapC ribonuclease Y4jK (140 aa).

The PINc domain maps to 2-135 (IVLDTNVISE…FEAAGLDIIN (134 aa)). Residues Asp-5 and Asp-104 each contribute to the Mg(2+) site.

It belongs to the PINc/VapC protein family. The cofactor is Mg(2+).

In terms of biological role, toxic component of a type II toxin-antitoxin (TA) system. An RNase. Involved in plasmid stability. The polypeptide is VapC ribonuclease Y4jK (Sinorhizobium fredii (strain NBRC 101917 / NGR234)).